Consider the following 268-residue polypeptide: UPF0294 protein ETA_26410 (268 aa).

The protein belongs to the UPF0294 family.

Its subcellular location is the cytoplasm. The protein is UPF0294 protein ETA_26410 of Erwinia tasmaniensis (strain DSM 17950 / CFBP 7177 / CIP 109463 / NCPPB 4357 / Et1/99).